The primary structure comprises 283 residues: Pantothenate synthetase (283 aa).

30 to 37 provides a ligand contact to ATP; the sequence is MGALHEGH. The active-site Proton donor is the histidine 37. Glutamine 61 is a binding site for (R)-pantoate. A beta-alanine-binding site is contributed by glutamine 61. Position 147–150 (147–150) interacts with ATP; that stretch reads GEKD. (R)-pantoate is bound at residue glutamine 153. ATP-binding positions include valine 176 and 184–187; that span reads VSSR.

The protein belongs to the pantothenate synthetase family. As to quaternary structure, homodimer.

It is found in the cytoplasm. It catalyses the reaction (R)-pantoate + beta-alanine + ATP = (R)-pantothenate + AMP + diphosphate + H(+). The protein operates within cofactor biosynthesis; (R)-pantothenate biosynthesis; (R)-pantothenate from (R)-pantoate and beta-alanine: step 1/1. Its function is as follows. Catalyzes the condensation of pantoate with beta-alanine in an ATP-dependent reaction via a pantoyl-adenylate intermediate. This Chlorobium luteolum (strain DSM 273 / BCRC 81028 / 2530) (Pelodictyon luteolum) protein is Pantothenate synthetase.